The sequence spans 645 residues: Phosphomethylpyrimidine synthase (645 aa).

Substrate-binding positions include Asn235, Met264, Tyr293, His329, 349-351 (SRG), 390-393 (DGLR), and Glu429. His433 provides a ligand contact to Zn(2+). Tyr456 provides a ligand contact to substrate. His497 contributes to the Zn(2+) binding site. Positions 577, 580, and 585 each coordinate [4Fe-4S] cluster.

It belongs to the ThiC family. As to quaternary structure, homodimer. It depends on [4Fe-4S] cluster as a cofactor.

It carries out the reaction 5-amino-1-(5-phospho-beta-D-ribosyl)imidazole + S-adenosyl-L-methionine = 4-amino-2-methyl-5-(phosphooxymethyl)pyrimidine + CO + 5'-deoxyadenosine + formate + L-methionine + 3 H(+). Its pathway is cofactor biosynthesis; thiamine diphosphate biosynthesis. Functionally, catalyzes the synthesis of the hydroxymethylpyrimidine phosphate (HMP-P) moiety of thiamine from aminoimidazole ribotide (AIR) in a radical S-adenosyl-L-methionine (SAM)-dependent reaction. In Vibrio cholerae serotype O1 (strain ATCC 39541 / Classical Ogawa 395 / O395), this protein is Phosphomethylpyrimidine synthase.